The chain runs to 529 residues: DNA polymerase lambda (529 aa).

Positions 14 to 109 (DPEGMFAGMV…EKANEDLYVL (96 aa)) constitute a BRCT domain. The interval 119-199 (PKKSLPAISG…ESTSVYKPPD (81 aa)) is disordered. Polar residues predominate over residues 153–175 (SHSNTQGSPDSPTSCSVPSTSAS). The segment covering 182 to 193 (ETPTSPQSESTS) has biased composition (low complexity). The DNA-binding stretch occupies residues 213-227 (NIYRALGEDRRSFSY). H260 is a catalytic residue. The DNA-binding stretch occupies residues 295 to 298 (GPAT). Residues R336, 367–370 (SYRR), and 376–379 (GDLD) contribute to the dCTP site. Residues 370–379 (RGKATCGDLD) form an involved in primer binding region. D377, D379, and D444 together coordinate Mn(2+). A DNA-binding region spans residues 418–459 (EEGTDSGVDTYFGLCTYPGQELRRRIDFKVYPRDIYSFGLIA). N467 is a dCTP binding site.

It belongs to the DNA polymerase type-X family. As to quaternary structure, interacts with the DNA repair proteins XRCC4 and LIG4. Interacts with HSP90-1. Requires Mn(2+) as cofactor.

The protein localises to the nucleus. It carries out the reaction DNA(n) + a 2'-deoxyribonucleoside 5'-triphosphate = DNA(n+1) + diphosphate. In terms of biological role, repair polymerase involved in base excision repair (BER) and responsible for repair of lesions that give rise to abasic (AP) sites in DNA. Has both DNA polymerase and terminal transferase activities. Has a 5'-deoxyribose-5-phosphate lyase (dRP lyase) activity. Involved in the repair of transposon-induced DNA double strand breaks (DSBs). Involved in repair of UV-B-mediated DNA damage during seedling development through an excision repair mechanism. Involved the repair of DSBs induced by high salinity and DNA cross-linking agent. Functions via the DNA non-homologous end joining (NHEJ) pathway. In Arabidopsis thaliana (Mouse-ear cress), this protein is DNA polymerase lambda.